The primary structure comprises 115 residues: NADH-ubiquinone oxidoreductase chain 3 (115 aa).

3 consecutive transmembrane segments (helical) span residues 1–21, 58–78, and 84–104; these read MMMLMTSITISFLLPMIVMLL, IAVIFLIFDVEIALILPIVII, and IMVWTLSTMLFIIILLVGLYY.

It belongs to the complex I subunit 3 family.

It is found in the mitochondrion membrane. The enzyme catalyses a ubiquinone + NADH + 5 H(+)(in) = a ubiquinol + NAD(+) + 4 H(+)(out). Its function is as follows. Core subunit of the mitochondrial membrane respiratory chain NADH dehydrogenase (Complex I) that is believed to belong to the minimal assembly required for catalysis. Complex I functions in the transfer of electrons from NADH to the respiratory chain. The immediate electron acceptor for the enzyme is believed to be ubiquinone. The sequence is that of NADH-ubiquinone oxidoreductase chain 3 (ND3) from Locusta migratoria (Migratory locust).